The sequence spans 250 residues: 2,3-bisphosphoglycerate-dependent phosphoglycerate mutase (250 aa).

Positions 10, 11, 17, 24, 62, 89, 92, 100, 116, 117, 184, 185, and 186 each coordinate (2R)-2,3-bisphosphoglycerate. The active-site Tele-phosphohistidine intermediate is the His11. Residue Gly24 coordinates (2R)-3-phosphoglycerate. (2R)-3-phosphoglycerate is bound by residues Glu89, Tyr92, Lys100, Arg116, and Arg117. Glu89 serves as the catalytic Proton donor/acceptor. Asn186 serves as a coordination point for (2R)-3-phosphoglycerate.

The protein belongs to the phosphoglycerate mutase family. BPG-dependent PGAM subfamily. As to expression, ubiquitously expressed with the highest expression in the sub-tegumental muscle layer (at protein level). Expressed in the tegument (at protein level).

Its subcellular location is the tegument. It carries out the reaction (2R)-2-phosphoglycerate = (2R)-3-phosphoglycerate. Its pathway is carbohydrate degradation; glycolysis; pyruvate from D-glyceraldehyde 3-phosphate: step 3/5. With respect to regulation, strongly activated by 2,3-bisphosphoglycerate (2,3-BPG). Inhibited by vanadate in a dose-dependent manner. Functionally, catalyzes interconversion of 3- and 2-phosphoglycerate with 2,3-bisphosphoglycerate (2,3-BPG) as the primer of the reaction. Schistosomula have significant surface phosphoglycerate mutase activity also without 2,3-BPG. Binds human plasminogen and enhances its conversion to active thrombolytic plasmin in the presence of human tissue plasminogen activator (tPA) in vitro. Host-interactive surface protein, which may degrade vascular blood clots surrounding the worm in vivo and thus may help survival of the parasite in its host microenvironment. The chain is 2,3-bisphosphoglycerate-dependent phosphoglycerate mutase from Schistosoma mansoni (Blood fluke).